A 582-amino-acid polypeptide reads, in one-letter code: MLHFLSSSSPLNPQFLLLPRQSARLRVLLSIPVSAMSSSSSSSSRGALAAAAVPSLSADEAGAAADEAFLRYTSPSMRRSGGGGVAIVWFRNDLRVLDNEAVVRAWAASDAVLPVYCVDPRISAGSTHYFGFPKTGALRAQFLIECLEDLKRNLTKQGLDLLIRHGKPEDILPSIAKAVTAHTVYAHKETCSEELLVEHLVRKGLEQVVIPQGGASNQKKPRNPKLQLIWGATLYHVDDLPFSVNNLPDVYTQFRKAVESKSSVRNCSKLPPSLGPPPGSGLDEIGGWGTVPTLESLGLSMTKAEKGMHFVGGESAALGRVHEYFWKKDQLKVYKETRNGMLGPDYSTKFSPWLASGSLSPRYICEEVKRYEKQRIANDSTYWVLFELIWRDYFRFISAKYGNSIFHLGGPRNVESKWSQDQALFESWRDGRTGYPLIDANMKELLATGFMSNRGRQIVCSFLVRDMGIDWRMGAEWFETCLLDYDPASNYGNWTYGAGVGNDPREDRYFSIPKQAKTYDPDGEYVAYWLPELRSIAKERRNFPGASYIKQVVPLKFDGGHQKRDQQFNRQRRPGHMYRRQK.

Residues 1-49 (MLHFLSSSSPLNPQFLLLPRQSARLRVLLSIPVSAMSSSSSSSSRGALA) constitute a chloroplast and mitochondrion transit peptide. Residues 84 to 234 (GVAIVWFRND…KLQLIWGATL (151 aa)) enclose the Photolyase/cryptochrome alpha/beta domain. A disordered region spans residues 560-582 (GHQKRDQQFNRQRRPGHMYRRQK). Basic residues predominate over residues 570–582 (RQRRPGHMYRRQK).

The protein belongs to the DNA photolyase class-1 family. The cofactor is FAD. It depends on (6R)-5,10-methylene-5,6,7,8-tetrahydrofolate as a cofactor.

It is found in the plastid. It localises to the chloroplast. Its subcellular location is the mitochondrion. Functionally, may have a photoreceptor function. Binds ss- and ds-DNA in a sequence non-specific manner, lacks photolyase activity. This Oryza sativa subsp. japonica (Rice) protein is Cryptochrome DASH, chloroplastic/mitochondrial (CRYD).